We begin with the raw amino-acid sequence, 380 residues long: Rab9 effector protein with kelch motifs (380 aa).

6 Kelch repeats span residues 57-103 (KIFI…FLPS), 108-154 (SIWV…TSSA), 159-211 (QLYV…AAGT), 212-258 (KLFI…AAVA), 262-311 (HVYM…VIPW), and 357-380 (LCFV…TVVD).

As to quaternary structure, interacts with PIKFYVE; the interaction recruits RABEPK to the endosomal membrane. Interacts with RAB9 in its GTP-bound conformation. In terms of processing, phosphorylated on Ser residues by PIKFYVE.

Its subcellular location is the cytoplasm. The protein localises to the endosome membrane. Rab9 effector required for endosome to trans-Golgi network (TGN) transport. This chain is Rab9 effector protein with kelch motifs, found in Mus musculus (Mouse).